Reading from the N-terminus, the 59-residue chain is Large ribosomal subunit protein bL32 (59 aa).

Residues Met-1–Thr-23 are disordered.

It belongs to the bacterial ribosomal protein bL32 family.

In Burkholderia multivorans (strain ATCC 17616 / 249), this protein is Large ribosomal subunit protein bL32.